Reading from the N-terminus, the 236-residue chain is uncharacterized protein (236 aa).

It is found in the plastid. The protein resides in the chloroplast. This is an uncharacterized protein from Chlorella vulgaris (Green alga).